The primary structure comprises 369 residues: Peptide chain release factor 2 (369 aa).

At Gln249 the chain carries N5-methylglutamine.

This sequence belongs to the prokaryotic/mitochondrial release factor family. Methylated by PrmC. Methylation increases the termination efficiency of RF2.

The protein localises to the cytoplasm. In terms of biological role, peptide chain release factor 2 directs the termination of translation in response to the peptide chain termination codons UGA and UAA. This chain is Peptide chain release factor 2, found in Thermosipho melanesiensis (strain DSM 12029 / CIP 104789 / BI429).